Consider the following 1331-residue polypeptide: Disease resistance protein RUN1 (1331 aa).

Residues M1–S20 form a disordered region. A TIR domain is found at I25–L190. NAD(+)-binding positions include R34–R39 and G66. Residue E100 is part of the active site. Positions S206–V434 constitute an NB-ARC domain. LRR repeat units follow at residues A429–D452, I480–I509, I540–K565, S616–G638, C648–R673, M684–M708, K709–L732, S734–M756, K757–L779, S781–M803, K804–L826, S828–M850, K851–L873, S875–M897, K898–L920, S922–M944, K945–L967, S969–M991, K992–L1014, and L1017–A1040. The short motif at R1287–R1291 is the Nuclear localization signal element.

The protein belongs to the disease resistance TIR-NB-LRR family.

It localises to the nucleus. The protein localises to the cytoplasm. The enzyme catalyses NAD(+) + H2O = ADP-D-ribose + nicotinamide + H(+). It carries out the reaction NADP(+) + H2O = ADP-D-ribose 2'-phosphate + nicotinamide + H(+). Functionally, disease resistance (R) protein that confers resistance to multiple powdery and downy mildew by promoting cell death. Acts as a NAD(+) hydrolase (NADase): in response to activation, catalyzes cleavage of NAD(+) into ADP-D-ribose (ADPR) and nicotinamide; NAD(+) cleavage triggering a defense system that promotes cell death. Also able to hydrolyze NADP(+), but not other NAD(+)-related molecules. In Vitis rotundifolia (Muscadine grape), this protein is Disease resistance protein RUN1.